The sequence spans 202 residues: Imidazoleglycerol-phosphate dehydratase (202 aa).

It belongs to the imidazoleglycerol-phosphate dehydratase family.

It localises to the cytoplasm. The catalysed reaction is D-erythro-1-(imidazol-4-yl)glycerol 3-phosphate = 3-(imidazol-4-yl)-2-oxopropyl phosphate + H2O. It functions in the pathway amino-acid biosynthesis; L-histidine biosynthesis; L-histidine from 5-phospho-alpha-D-ribose 1-diphosphate: step 6/9. The chain is Imidazoleglycerol-phosphate dehydratase from Rhodopirellula baltica (strain DSM 10527 / NCIMB 13988 / SH1).